Here is a 494-residue protein sequence, read N- to C-terminus: Acetyl-coenzyme A carboxylase carboxyl transferase subunit beta, chloroplastic (494 aa).

The CoA carboxyltransferase N-terminal domain maps to 230–494 (LWVQCENCYG…LHGFFPLNQN (265 aa)). The Zn(2+) site is built by Cys234, Cys237, Cys253, and Cys256. A C4-type zinc finger spans residues 234-256 (CENCYGLNYKKFFRSKMNICEQC).

The protein belongs to the AccD/PCCB family. As to quaternary structure, acetyl-CoA carboxylase is a heterohexamer composed of biotin carboxyl carrier protein, biotin carboxylase and 2 subunits each of ACCase subunit alpha and ACCase plastid-coded subunit beta (accD). The cofactor is Zn(2+).

It localises to the plastid. It is found in the chloroplast stroma. The enzyme catalyses N(6)-carboxybiotinyl-L-lysyl-[protein] + acetyl-CoA = N(6)-biotinyl-L-lysyl-[protein] + malonyl-CoA. It functions in the pathway lipid metabolism; malonyl-CoA biosynthesis; malonyl-CoA from acetyl-CoA: step 1/1. Component of the acetyl coenzyme A carboxylase (ACC) complex. Biotin carboxylase (BC) catalyzes the carboxylation of biotin on its carrier protein (BCCP) and then the CO(2) group is transferred by the transcarboxylase to acetyl-CoA to form malonyl-CoA. The protein is Acetyl-coenzyme A carboxylase carboxyl transferase subunit beta, chloroplastic of Drimys granadensis.